We begin with the raw amino-acid sequence, 391 residues long: Phosphoglycerate kinase (391 aa).

Residues 21-23 (DLN), Arg36, 59-62 (HLGR), Arg113, and Arg146 each bind substrate. Residues Lys197, Glu319, and 345–348 (GGDT) each bind ATP.

This sequence belongs to the phosphoglycerate kinase family. In terms of assembly, monomer.

It localises to the cytoplasm. It carries out the reaction (2R)-3-phosphoglycerate + ATP = (2R)-3-phospho-glyceroyl phosphate + ADP. Its pathway is carbohydrate degradation; glycolysis; pyruvate from D-glyceraldehyde 3-phosphate: step 2/5. The polypeptide is Phosphoglycerate kinase (Xanthomonas oryzae pv. oryzae (strain PXO99A)).